A 121-amino-acid chain; its full sequence is DNA-directed RNA polymerase subunit omega (121 aa).

Belongs to the RNA polymerase subunit omega family. As to quaternary structure, the RNAP catalytic core consists of 2 alpha, 1 beta, 1 beta' and 1 omega subunit. When a sigma factor is associated with the core the holoenzyme is formed, which can initiate transcription.

The enzyme catalyses RNA(n) + a ribonucleoside 5'-triphosphate = RNA(n+1) + diphosphate. Promotes RNA polymerase assembly. Latches the N- and C-terminal regions of the beta' subunit thereby facilitating its interaction with the beta and alpha subunits. This Syntrophobacter fumaroxidans (strain DSM 10017 / MPOB) protein is DNA-directed RNA polymerase subunit omega.